Reading from the N-terminus, the 269-residue chain is Phosphatidylglycerol--prolipoprotein diacylglyceryl transferase (269 aa).

The next 7 helical transmembrane spans lie at 10-30 (IAVS…LIGF), 56-76 (AIFY…ILFY), 91-111 (IWEG…AMFF), 126-146 (FLAP…FIGG), 172-192 (PSQL…LWFF), 200-220 (YCVS…VEFV), and 237-257 (EGQL…MAGL). Arginine 139 is an a 1,2-diacyl-sn-glycero-3-phospho-(1'-sn-glycerol) binding site.

This sequence belongs to the Lgt family.

It localises to the cell inner membrane. It catalyses the reaction L-cysteinyl-[prolipoprotein] + a 1,2-diacyl-sn-glycero-3-phospho-(1'-sn-glycerol) = an S-1,2-diacyl-sn-glyceryl-L-cysteinyl-[prolipoprotein] + sn-glycerol 1-phosphate + H(+). Its pathway is protein modification; lipoprotein biosynthesis (diacylglyceryl transfer). Its function is as follows. Catalyzes the transfer of the diacylglyceryl group from phosphatidylglycerol to the sulfhydryl group of the N-terminal cysteine of a prolipoprotein, the first step in the formation of mature lipoproteins. The protein is Phosphatidylglycerol--prolipoprotein diacylglyceryl transferase of Marinomonas sp. (strain MWYL1).